Here is a 431-residue protein sequence, read N- to C-terminus: MSKIVKVIGREIIDSRGNPTVEAEVHLEGGFVGLAAAPSGASTGSREALELRDGDKSRFLGKGVTKAVAAVNGPIAQAVLGKDAKDQANIDKIMIDLDGTENKSQFGANAILAVSLAAAKAAAASKGLPLYAHIAELNGTPGKYSMPLPMMNIINGGEHADNNVDIQEFMIQPVGAKTLKEAIRMGSEVFHTLAKVLKSKGMGTAVGDEGGYAPNLGSNAEALAVIAEAVKAAGYELGKDITLAMDCAASEFYKDGKYVLAGEGNKSFTSEEFTHFLEDLTKQYPIVSIEDGLDESDWAGFAYQTKVLGDKIQLVGDDLFVTNTKILKEGIDKGIANSILIKFNQIGSLTETLAAIKMAKDAGYTAVISHRSGETEDATIADLAVGTAAGQIKTGSMSRSDRVAKYNQLIRIEEALGDSAPFNGLKEVKGQ.

(2R)-2-phosphoglycerate is bound at residue Gln-167. Glu-209 acts as the Proton donor in catalysis. 3 residues coordinate Mg(2+): Asp-246, Glu-290, and Asp-317. (2R)-2-phosphoglycerate is bound by residues Lys-342, Arg-371, Ser-372, and Lys-393. The active-site Proton acceptor is Lys-342.

Belongs to the enolase family. As to quaternary structure, component of the RNA degradosome, a multiprotein complex involved in RNA processing and mRNA degradation. The cofactor is Mg(2+).

Its subcellular location is the cytoplasm. It is found in the secreted. The protein resides in the cell surface. It catalyses the reaction (2R)-2-phosphoglycerate = phosphoenolpyruvate + H2O. It participates in carbohydrate degradation; glycolysis; pyruvate from D-glyceraldehyde 3-phosphate: step 4/5. In terms of biological role, catalyzes the reversible conversion of 2-phosphoglycerate (2-PG) into phosphoenolpyruvate (PEP). It is essential for the degradation of carbohydrates via glycolysis. This is Enolase from Pectobacterium atrosepticum (strain SCRI 1043 / ATCC BAA-672) (Erwinia carotovora subsp. atroseptica).